The primary structure comprises 297 residues: Nucleotide-binding protein Bxeno_A0336 (297 aa).

8-15 (GISGSGKS) provides a ligand contact to ATP. A GTP-binding site is contributed by 57–60 (DARS).

The protein belongs to the RapZ-like family.

Functionally, displays ATPase and GTPase activities. The protein is Nucleotide-binding protein Bxeno_A0336 of Paraburkholderia xenovorans (strain LB400).